The primary structure comprises 339 residues: Dihydroorotase (339 aa).

Residues histidine 12 and histidine 14 each contribute to the Zn(2+) site. Residues 14–16 (HVR) and asparagine 40 each bind substrate. Residues lysine 94, histidine 133, histidine 167, and aspartate 239 each contribute to the Zn(2+) site. An N6-carboxylysine modification is found at lysine 94. Histidine 133 provides a ligand contact to substrate. The active site involves aspartate 239. Histidine 243 and alanine 255 together coordinate substrate.

This sequence belongs to the metallo-dependent hydrolases superfamily. DHOase family. Class II DHOase subfamily. In terms of assembly, homodimer. Requires Zn(2+) as cofactor.

The catalysed reaction is (S)-dihydroorotate + H2O = N-carbamoyl-L-aspartate + H(+). The protein operates within pyrimidine metabolism; UMP biosynthesis via de novo pathway; (S)-dihydroorotate from bicarbonate: step 3/3. Its function is as follows. Catalyzes the reversible cyclization of carbamoyl aspartate to dihydroorotate. The polypeptide is Dihydroorotase (Helicobacter pylori (strain G27)).